The following is a 302-amino-acid chain: Protein FdhE homolog (302 aa).

The protein belongs to the FdhE family.

The protein resides in the cytoplasm. Functionally, necessary for formate dehydrogenase activity. This chain is Protein FdhE homolog, found in Haemophilus influenzae (strain PittGG).